The sequence spans 361 residues: Chorismate synthase (361 aa).

NADP(+)-binding residues include R48 and R54. Residues 125 to 127, 238 to 239, G278, 293 to 297, and R319 each bind FMN; these read RSS, NA, and KPTSS.

Belongs to the chorismate synthase family. In terms of assembly, homotetramer. FMNH2 is required as a cofactor.

The enzyme catalyses 5-O-(1-carboxyvinyl)-3-phosphoshikimate = chorismate + phosphate. Its pathway is metabolic intermediate biosynthesis; chorismate biosynthesis; chorismate from D-erythrose 4-phosphate and phosphoenolpyruvate: step 7/7. Catalyzes the anti-1,4-elimination of the C-3 phosphate and the C-6 proR hydrogen from 5-enolpyruvylshikimate-3-phosphate (EPSP) to yield chorismate, which is the branch point compound that serves as the starting substrate for the three terminal pathways of aromatic amino acid biosynthesis. This reaction introduces a second double bond into the aromatic ring system. The protein is Chorismate synthase of Shigella boydii serotype 18 (strain CDC 3083-94 / BS512).